A 445-amino-acid chain; its full sequence is 23S rRNA (uracil(1939)-C(5))-methyltransferase RlmD (445 aa).

In terms of domain architecture, TRAM spans 6–64 (RRLPREPFEIAITGLSHEGRGIAHHDERTLFVHGALPGERVRAVYTKRRRSVAEARVVE). The [4Fe-4S] cluster site is built by C77, C83, C86, and C165. S-adenosyl-L-methionine contacts are provided by Q274, F303, N308, E324, D351, and D372. The active-site Nucleophile is C398.

Belongs to the class I-like SAM-binding methyltransferase superfamily. RNA M5U methyltransferase family. RlmD subfamily.

It carries out the reaction uridine(1939) in 23S rRNA + S-adenosyl-L-methionine = 5-methyluridine(1939) in 23S rRNA + S-adenosyl-L-homocysteine + H(+). Functionally, catalyzes the formation of 5-methyl-uridine at position 1939 (m5U1939) in 23S rRNA. This Alkalilimnicola ehrlichii (strain ATCC BAA-1101 / DSM 17681 / MLHE-1) protein is 23S rRNA (uracil(1939)-C(5))-methyltransferase RlmD.